A 572-amino-acid chain; its full sequence is mRNA cap guanine-N(7) methyltransferase (572 aa).

Disordered stretches follow at residues Met1 to Val75 and Glu110 to Ser140. Composition is skewed to basic and acidic residues over residues Ala24 to Asp39 and Ser59 to Asp69. Over residues Thr123 to Ser140 the composition is skewed to low complexity. The mRNA cap 0 methyltransferase domain occupies Ser262–Val571. Asn271 to Asn272 is a binding site for mRNA. 6 residues coordinate S-adenosyl-L-methionine: Lys275, Cys302, Asp324, Asp366, Gln396, and Tyr401.

It belongs to the class I-like SAM-binding methyltransferase superfamily. mRNA cap 0 methyltransferase family.

It is found in the nucleus. The enzyme catalyses a 5'-end (5'-triphosphoguanosine)-ribonucleoside in mRNA + S-adenosyl-L-methionine = a 5'-end (N(7)-methyl 5'-triphosphoguanosine)-ribonucleoside in mRNA + S-adenosyl-L-homocysteine. Responsible for methylating the 5'-cap structure of mRNAs. The protein is mRNA cap guanine-N(7) methyltransferase (ABD1) of Lodderomyces elongisporus (strain ATCC 11503 / CBS 2605 / JCM 1781 / NBRC 1676 / NRRL YB-4239) (Yeast).